Consider the following 62-residue polypeptide: Protein translocase subunit SecE (62 aa).

Residues 40 to 60 (LLVLAVVGVLAYIIQLALTLI) form a helical membrane-spanning segment.

The protein belongs to the SecE/SEC61-gamma family. In terms of assembly, component of the Sec protein translocase complex. Heterotrimer consisting of SecY (alpha), SecG (beta) and SecE (gamma) subunits. The heterotrimers can form oligomers, although 1 heterotrimer is thought to be able to translocate proteins. Interacts with the ribosome. May interact with SecDF, and other proteins may be involved.

Its subcellular location is the cell membrane. Its function is as follows. Essential subunit of the Sec protein translocation channel SecYEG. Clamps together the 2 halves of SecY. May contact the channel plug during translocation. The sequence is that of Protein translocase subunit SecE from Saccharolobus solfataricus (strain ATCC 35092 / DSM 1617 / JCM 11322 / P2) (Sulfolobus solfataricus).